The primary structure comprises 1222 residues: Deubiquitinating protein VCPIP1 (1222 aa).

The span at 1-21 (MSQPPPPPPPLPPPPPPPEAP) shows a compositional bias: pro residues. Residues 1-36 (MSQPPPPPPPLPPPPPPPEAPQTPSSLASAAASGGL) form a disordered region. Positions 25–36 (SSLASAAASGGL) are enriched in low complexity. In terms of domain architecture, OTU spans 208–361 (LIPVHVDGDG…RNHYIPLVGI (154 aa)). Residue Asp-216 is part of the active site. The Nucleophile role is filled by Cys-219. His-354 is a catalytic residue. Lys-408 carries the post-translational modification N6-acetyllysine. Disordered stretches follow at residues 725 to 776 (SVMQ…KEKK), 989 to 1009 (EATTRSRESSPSHGLLKLGSG), and 1024 to 1074 (AFQG…VFTA). Residues Ser-747 and Ser-757 each carry the phosphoserine modification. Low complexity predominate over residues 755–771 (PSSAPATPTKAPYSPTT). A Phosphothreonine modification is found at Thr-763. A phosphoserine mark is found at Ser-768, Ser-994, and Ser-998. Over residues 1041 to 1050 (LDPRARETSV) the composition is skewed to basic and acidic residues. Residues 1057–1074 (GTDFSNSSTKTEPSVFTA) are compositionally biased toward polar residues. A Phosphoserine modification is found at Ser-1077. 2 disordered regions span residues 1113 to 1175 (VSSI…TETT) and 1188 to 1222 (ATRSKAQRGNSVEELEEMDSQDAEMTNTTEPMDHS). Over residues 1143-1157 (VVSSSAKSGSLQTGL) the composition is skewed to polar residues. The span at 1163–1175 (LTGGTENLNTETT) shows a compositional bias: low complexity. Ser-1198 is subject to Phosphoserine. Residues 1200–1209 (EELEEMDSQD) are compositionally biased toward acidic residues. A Phosphoserine; by ATM modification is found at Ser-1207. Residues 1210–1222 (AEMTNTTEPMDHS) are compositionally biased toward polar residues.

Binds VCP and the ternary complex containing STX5A, NSFL1C and VCP. In terms of processing, phosphorylated at Ser-1207 by ATM or ATR following induction of covalent DNA-protein cross-links (DPCs).

Its subcellular location is the nucleus. It is found in the cytoplasm. The protein localises to the endoplasmic reticulum. The protein resides in the golgi apparatus. It localises to the golgi stack. It catalyses the reaction Thiol-dependent hydrolysis of ester, thioester, amide, peptide and isopeptide bonds formed by the C-terminal Gly of ubiquitin (a 76-residue protein attached to proteins as an intracellular targeting signal).. In terms of biological role, deubiquitinating enzyme involved in DNA repair and reassembly of the Golgi apparatus and the endoplasmic reticulum following mitosis. Necessary for VCP-mediated reassembly of Golgi stacks after mitosis. Plays a role in VCP-mediated formation of transitional endoplasmic reticulum (tER). Mediates dissociation of the ternary complex containing STX5A, NSFL1C and VCP. Also involved in DNA repair following phosphorylation by ATM or ATR: acts by catalyzing deubiquitination of SPRTN, thereby promoting SPRTN recruitment to chromatin and subsequent proteolytic cleavage of covalent DNA-protein cross-links (DPCs). Hydrolyzes 'Lys-11'- and 'Lys-48'-linked polyubiquitin chains. (Microbial infection) Regulates the duration of C.botulinum neurotoxin type A (BoNT/A) intoxication by catalyzing deubiquitination of Botulinum neurotoxin A light chain (LC), thereby preventing LC degradation by the proteasome, and accelerating botulinum neurotoxin intoxication in patients. The protein is Deubiquitinating protein VCPIP1 of Homo sapiens (Human).